We begin with the raw amino-acid sequence, 241 residues long: Cobalt transport protein CbiM (241 aa).

The signal sequence occupies residues 1-24 (MKKIKIISFSVAYLILLTPIYASA). Helical transmembrane passes span 30–50 (GFLP…FIVG), 67–87 (LLLG…LPSV), 99–119 (LGTI…VLIF), 131–151 (TLGA…YFIF), 160–180 (SLAV…VTSL), and 202–222 (GIFA…TLIV).

Belongs to the CbiM family. As to quaternary structure, forms an energy-coupling factor (ECF) transporter complex composed of an ATP-binding protein (A component, CbiO), a transmembrane protein (T component, CbiQ) and 2 possible substrate-capture proteins (S components, CbiM and CbiN) of unknown stoichimetry.

It localises to the cell membrane. It functions in the pathway cofactor biosynthesis; adenosylcobalamin biosynthesis. In terms of biological role, part of the energy-coupling factor (ECF) transporter complex CbiMNOQ involved in cobalt import. This Acetoanaerobium sticklandii (strain ATCC 12662 / DSM 519 / JCM 1433 / CCUG 9281 / NCIMB 10654 / HF) (Clostridium sticklandii) protein is Cobalt transport protein CbiM.